Reading from the N-terminus, the 399-residue chain is 1-deoxy-D-xylulose 5-phosphate reductoisomerase (399 aa).

NADPH contacts are provided by threonine 11, glycine 12, serine 13, isoleucine 14, glycine 37, asparagine 39, and asparagine 125. Lysine 126 contacts 1-deoxy-D-xylulose 5-phosphate. Glutamate 127 provides a ligand contact to NADPH. Position 151 (aspartate 151) interacts with Mn(2+). 4 residues coordinate 1-deoxy-D-xylulose 5-phosphate: serine 152, glutamate 153, serine 177, and histidine 200. Glutamate 153 contributes to the Mn(2+) binding site. Glycine 206 serves as a coordination point for NADPH. Residues serine 213, asparagine 218, lysine 219, and glutamate 222 each contribute to the 1-deoxy-D-xylulose 5-phosphate site. Position 222 (glutamate 222) interacts with Mn(2+).

This sequence belongs to the DXR family. Mg(2+) is required as a cofactor. The cofactor is Mn(2+).

It carries out the reaction 2-C-methyl-D-erythritol 4-phosphate + NADP(+) = 1-deoxy-D-xylulose 5-phosphate + NADPH + H(+). Its pathway is isoprenoid biosynthesis; isopentenyl diphosphate biosynthesis via DXP pathway; isopentenyl diphosphate from 1-deoxy-D-xylulose 5-phosphate: step 1/6. In terms of biological role, catalyzes the NADPH-dependent rearrangement and reduction of 1-deoxy-D-xylulose-5-phosphate (DXP) to 2-C-methyl-D-erythritol 4-phosphate (MEP). The polypeptide is 1-deoxy-D-xylulose 5-phosphate reductoisomerase (Nostoc sp. (strain PCC 7120 / SAG 25.82 / UTEX 2576)).